Consider the following 344-residue polypeptide: Thioredoxin reductase FGSG_00043 (344 aa).

Residues 12–15 (GGPA), 34–39 (DSVSYR), His51, and Ala121 each bind FAD. Cysteines 165 and 168 form a disulfide. FAD contacts are provided by residues Asp314 and 321-322 (FV).

This sequence belongs to the class-II pyridine nucleotide-disulfide oxidoreductase family. In terms of assembly, homodimer. It depends on FAD as a cofactor.

Its pathway is mycotoxin biosynthesis. Thioredoxin reductase; part of the gene cluster that mediates the biosynthesis of gramillins A and B, bicyclic lipopeptides that induce cell death in maize leaves but not in wheat leaves. The nonribosomal peptide synthetase GRA1 incorporates respectively a glutamic adic (Glu), a leucine (Leu), a serine (Ser), a hydroxyglutamine (HOGln), a 2-amino decanoic acid, and 2 cysteins (CysB and CysA). The biosynthesis of 2-amino decanoic acid incorporated in gramillins could be initiated by a fatty acid synthase composed of the alpha and beta subunits FGSG_00036 and FGSG_11656. The cytochrome P450 monooxygenase FGSG_15680 could hydroxylate the fatty acid chain. Subsequent oxidation to the ketone by the oxidoreductase FGSG_00048 and transamination by aminotransferase FGSG_00049 could form 2-amino-decanoic acid. On the other hand, FGSG_15680 could also be responsible for the HO-modified glutamine at the gamma-position. Whether hydroxylation occurs on the fully assembled product or on the Gln residue prior to assembly into the gramillins requires further proof. The thioredoxin FGSG_00043 could also be required for the disulfide-bond formation between CysA and CysB. The specific involvement of the remaining proteins from the cluster is more difficult to discern, but could have broader regulatory (FGSG_00040 and FGSG_11657) or enzymatic functions (FGSG_00044 and FGSG_00045). The final C-domain of GRA1 does not possess the expected sequence of a termination CT domain, often implicated in macrocyclization and release of a cyclopeptidein fungal NRPs; and the thioesterase FGSG_00047 may act in concert with the terminal C-domain of GRA1 to catalyze the formation of the macrocyclic anhydride and release of the products. The polypeptide is Thioredoxin reductase FGSG_00043 (Gibberella zeae (strain ATCC MYA-4620 / CBS 123657 / FGSC 9075 / NRRL 31084 / PH-1) (Wheat head blight fungus)).